The primary structure comprises 322 residues: Mas-related G-protein coupled receptor member X3 (322 aa).

Residues 1-31 (MDSTIPVLGTELTPINGREETPCYKQTLSFT) are Extracellular-facing. Residues 32–52 (GLTCIVSLVALTGNAVVLWLL) form a helical membrane-spanning segment. Residues 53–60 (GCRMRRNA) lie on the Cytoplasmic side of the membrane. A helical membrane pass occupies residues 61 to 81 (VSIYILNLVAADFLFLSGHII). Over 82 to 96 (CSPLRLINIRHPISK) the chain is Extracellular. The helical transmembrane segment at 97–117 (ILSPVMTFPYFIGLSMLSAIS) threads the bilayer. Residues 118-140 (TERCLSILWPIWYHCRRPRYLSS) lie on the Cytoplasmic side of the membrane. Residues 141–161 (VMCVLLWALSLLRSILEWMFC) traverse the membrane as a helical segment. Over 162 to 177 (DFLFSGANSVWCETSD) the chain is Extracellular. A helical membrane pass occupies residues 178-198 (FITIAWLVFLCVVLCGSSLVL). Topologically, residues 199 to 213 (LVRILCGSRKMPLTR) are cytoplasmic. Residues 214–234 (LYVTILLTVLVFLLCGLPFGI) form a helical membrane-spanning segment. Over 235-254 (QWALFSRIHLDWKVLFCHVH) the chain is Extracellular. A helical membrane pass occupies residues 255-275 (LVSIFLSALNSSANPIIYFFV). At 276-322 (GSFRQRQNRQNLKLVLQRALQDTPEVDEGGGWLPQETLELSGSRLEQ) the chain is on the cytoplasmic side.

Belongs to the G-protein coupled receptor 1 family. Mas subfamily. In terms of tissue distribution, uniquely localized in a subset of small dorsal root and trigeminal sensory neurons.

It is found in the cell membrane. In terms of biological role, orphan receptor. Probably involved in the function of nociceptive neurons. May regulate nociceptor function and/or development, including the sensation or modulation of pain. Potently activated by enkephalins. This is Mas-related G-protein coupled receptor member X3 (MRGPRX3) from Homo sapiens (Human).